Reading from the N-terminus, the 386-residue chain is Alanine racemase 1 (386 aa).

The Proton acceptor; specific for D-alanine role is filled by Lys38. Lys38 bears the N6-(pyridoxal phosphate)lysine mark. Substrate is bound at residue Arg136. Tyr267 serves as the catalytic Proton acceptor; specific for L-alanine. Residue Met315 participates in substrate binding.

This sequence belongs to the alanine racemase family. It depends on pyridoxal 5'-phosphate as a cofactor.

It catalyses the reaction L-alanine = D-alanine. It functions in the pathway amino-acid biosynthesis; D-alanine biosynthesis; D-alanine from L-alanine: step 1/1. Catalyzes the interconversion of L-alanine and D-alanine. May also act on other amino acids. This Clostridium acetobutylicum (strain ATCC 824 / DSM 792 / JCM 1419 / IAM 19013 / LMG 5710 / NBRC 13948 / NRRL B-527 / VKM B-1787 / 2291 / W) protein is Alanine racemase 1 (alr1).